A 78-amino-acid chain; its full sequence is Large ribosomal subunit protein bL28 (78 aa).

Residues 1-24 (MSRVCQVTGKRPAVGNNRSHANNA) are disordered.

It belongs to the bacterial ribosomal protein bL28 family.

The chain is Large ribosomal subunit protein bL28 from Aeromonas salmonicida (strain A449).